The sequence spans 89 residues: UPF0223 protein BPUM_1362 (89 aa).

Belongs to the UPF0223 family.

This chain is UPF0223 protein BPUM_1362, found in Bacillus pumilus (strain SAFR-032).